Reading from the N-terminus, the 580-residue chain is High affinity choline transporter 1 (580 aa).

Residues 1 to 6 are Extracellular-facing; it reads MSFHVE. The chain crosses the membrane as a helical span at residues 7-27; it reads GLVAIILFYLLIFLVGIWAAW. Residues 28–48 are Cytoplasmic-facing; it reads KTKNSGNPEERSEAIIVGGRD. Residues 49-69 form a helical membrane-spanning segment; it reads IGLLVGGFTMTATWVGGGYIN. Residues 70–81 lie on the Extracellular side of the membrane; that stretch reads GTAEAVYGPGCG. A helical transmembrane segment spans residues 82–102; the sequence is LAWAQAPIGYSLSLILGGLFF. The Cytoplasmic segment spans residues 103 to 125; it reads AKPMRSKGYVTMLDPFQQIYGKR. A helical membrane pass occupies residues 126–146; the sequence is MGGLLFIPALMGEMFWAAAIF. The Extracellular portion of the chain corresponds to 147–164; the sequence is SALGATISVIIDVDVNIS. The helical transmembrane segment at 165–185 threads the bilayer; the sequence is VIVSALIAILYTLVGGLYSVA. The Cytoplasmic segment spans residues 186–191; that stretch reads YTDVVQ. A helical transmembrane segment spans residues 192–212; sequence LFCIFIGLWISVPFALSHPAV. Over 213-237 the chain is Extracellular; sequence TDIGFTAVHAKYQSPWLGTIESVEV. A helical membrane pass occupies residues 238–258; it reads YTWLDNFLLLMLGGIPWQAYF. The Cytoplasmic portion of the chain corresponds to 259–274; the sequence is QRVLSSSSATYAQVLS. A helical transmembrane segment spans residues 275–295; that stretch reads FLAAFGCLVMALPAICIGAIG. Over 296 to 317 the chain is Extracellular; it reads ASTDWNQTAYGYPDPKTKEEAD. Asparagine 301 is a glycosylation site (N-linked (GlcNAc...) asparagine). The helical transmembrane segment at 318–338 threads the bilayer; sequence MILPIVLQYLCPVYISFFGLG. Residues 339 to 376 lie on the Cytoplasmic side of the membrane; sequence AVSAAVMSSADSSILSASSMFARNIYQLSFRQNASDKE. A helical transmembrane segment spans residues 377-397; sequence IVWVMRITVLVFGASATAMAL. Topologically, residues 398 to 406 are extracellular; sequence LTKTVYGLW. The helical transmembrane segment at 407–427 threads the bilayer; that stretch reads YLSSDLVYIIIFPQLLCVLFI. At 428 to 435 the chain is on the cytoplasmic side; it reads KGTNTYGA. The helical transmembrane segment at 436 to 456 threads the bilayer; that stretch reads VAGYIFGLFLRITGGEPYLYL. At 457–481 the chain is on the extracellular side; sequence QPLIFYPGYYSDKNGIYNQRFPFKT. Residues 482–502 form a helical membrane-spanning segment; sequence LSMVTSFFTNICVSYLAKYLF. The mediates interaction with SEC14L1 stretch occupies residues 502 to 580; sequence FESGTLPPKL…EGSGTEDNLQ (79 aa). The Cytoplasmic portion of the chain corresponds to 503-580; that stretch reads ESGTLPPKLD…EGSGTEDNLQ (78 aa). The short motif at 527–532 is the Dileucine-like motif element; the sequence is DKTILV.

This sequence belongs to the sodium:solute symporter (SSF) (TC 2.A.21) family. As to quaternary structure, homooligomerizes at cell surface. Interacts with SEC14L1; may regulate SLC5A7. Post-translationally, phosphorylated by PKC and dephosphorylated by PP1/PP2A. As to expression, found in spinal cord, brain-stem, mid-brain and striatum. Specific for cholinergic neurons.

The protein localises to the presynaptic cell membrane. The protein resides in the cell projection. It localises to the axon. Its subcellular location is the early endosome membrane. It is found in the cytoplasmic vesicle. The protein localises to the secretory vesicle. The protein resides in the synaptic vesicle membrane. It carries out the reaction choline(out) + n Na(+)(out) = choline(in) + n Na(+)(in). With respect to regulation, choline uptake activity is regulated by SLC5A7/CHT1 internalization (inactive form) from the cell surface and recycling of internalized SLC5A7/CHT1 into the cell surface (active form). Activated by extracellular chloride ion. Specifically inhibited by nanomolar concentrations of hemicholinium 3. Functionally, high-affinity Na(+)-coupled choline transmembrane symporter. Functions as an electrogenic, voltage-dependent transporter with variable charge/choline stoichiometry. Choline uptake and choline-induced current is also Cl(-)-dependent where Cl(-) is likely a regulatory ion rather than cotransported ion. Plays a critical role in acetylcholine (ACh) synthesis by taking up the substrate choline from the synaptic cleft into the presynaptic nerve terminals after neurotransmitter release. SLC5A7/CHT1-mediated choline high-affinity transport in cholinergic neurons is the rate-limiting step for production of ACh, thereby facilitating communication by subsequent action potentials. Localized predominantly in presynaptic terminal intracellular organelles, and translocated to the plasma membrane in active form in response to neuronal activity. The chain is High affinity choline transporter 1 from Mus musculus (Mouse).